Here is a 323-residue protein sequence, read N- to C-terminus: MKPENKIPVLTRLSDEMKAVVNFQQPGLPPWPADGDIETQRQYYLLERRFWNADAPSMTTRTCAVPTPYGDVTTRLYSPQPTSQATLYYLHGGGFILGNLDTHDRIMRLLARYTGCTVIGIDYSLSPQARYPQAIEETVAVCSYFSQHADEYSLNVEKIGFAGDSAGAMLALASALWLRDKHIRCGNVIAILLWYGLYGLQDSVSRRLFGGAWDGLTREDLDMYEKAYLRNEDDRESPWYCLFNNDLTRDVPPCFIASAEFDPLIDDSRLLHQTLQAHQQPCEYKMYPGTLHAFLHYSRMMTIADDALQDGARFFMARMKTPR.

Residues 91–93 (HGG) carry the Involved in the stabilization of the negatively charged intermediate by the formation of the oxyanion hole motif. Active-site residues include Ser165, Asp262, and His292.

Belongs to the 'GDXG' lipolytic enzyme family. As to quaternary structure, homodimer. Interacts with MalT and MelA.

The protein resides in the cytoplasm. Displays esterase activity towards short chain fatty esters (acyl chain length of up to 8 carbons). Able to hydrolyze triacetylglycerol (triacetin) and tributyrylglycerol (tributyrin), but not trioleylglycerol (triolein) or cholesterol oleate. Negatively regulates MalT activity by antagonizing maltotriose binding. Inhibits MelA galactosidase activity. The protein is Acetyl esterase of Salmonella agona (strain SL483).